The chain runs to 335 residues: MKRIAIDAMGGDNAPKAIVEGVNQAIEAFSDIEIQLYGDQTKINSYLIQSDRVAIIHTDEKIMSDDEPAKAVRRKKKASMVLAAKAVKEGKADAIISAGNTGALLAVGLFVVGRIKGVDRPGLLSTIPTVTGLGFDMLDLGANAENTAKHLHQYAILGSFYAKNVRGIANPRVGLLNNGTEETKGDPLRKATYELLTADNTISFVGNVEARELMSGVADVIVSDGFTGNAVLKSIEGTAISIMGQLKQIINSGGIKTKIGASLLKSSLYEMKKTLDYSSAGGAVLFGLKAPVVKSHGSSDVKAIFSTIKQVRTMLDTNVVGQLVEEFAKETQVND.

It belongs to the PlsX family. Homodimer. Probably interacts with PlsY.

It is found in the cytoplasm. The enzyme catalyses a fatty acyl-[ACP] + phosphate = an acyl phosphate + holo-[ACP]. It participates in lipid metabolism; phospholipid metabolism. Its function is as follows. Catalyzes the reversible formation of acyl-phosphate (acyl-PO(4)) from acyl-[acyl-carrier-protein] (acyl-ACP). This enzyme utilizes acyl-ACP as fatty acyl donor, but not acyl-CoA. The polypeptide is Phosphate acyltransferase (Streptococcus pyogenes serotype M1).